A 131-amino-acid chain; its full sequence is UPF0102 protein H16_A3579 (131 aa).

The protein belongs to the UPF0102 family.

The protein is UPF0102 protein H16_A3579 of Cupriavidus necator (strain ATCC 17699 / DSM 428 / KCTC 22496 / NCIMB 10442 / H16 / Stanier 337) (Ralstonia eutropha).